We begin with the raw amino-acid sequence, 133 residues long: uncharacterized protein (133 aa).

This is an uncharacterized protein from Human adenovirus B serotype 7 (HAdV-7).